A 592-amino-acid chain; its full sequence is A-type ATP synthase subunit A (592 aa).

234–241 (GGFGTGKT) contacts ATP.

It belongs to the ATPase alpha/beta chains family. In terms of assembly, has multiple subunits with at least A(3), B(3), C, D, E, F, H, I and proteolipid K(x).

It is found in the cell membrane. It carries out the reaction ATP + H2O + 4 H(+)(in) = ADP + phosphate + 5 H(+)(out). Its function is as follows. Component of the A-type ATP synthase that produces ATP from ADP in the presence of a proton gradient across the membrane. The A chain is the catalytic subunit. In Cenarchaeum symbiosum (strain A), this protein is A-type ATP synthase subunit A.